The sequence spans 130 residues: Serum amyloid A-4 protein (130 aa).

A signal peptide spans 1–18; the sequence is MRLATVIVLCSLFLGVSG. The segment at 109 to 130 is disordered; it reads EEWGRSGKNPNHFRPEGLPEKF. Over residues 121–130 the composition is skewed to basic and acidic residues; sequence FRPEGLPEKF.

The protein belongs to the SAA family. Apolipoprotein of the HDL complex. In terms of tissue distribution, expressed by the liver; secreted in plasma.

The protein resides in the secreted. Functionally, major acute phase reactant. This is Serum amyloid A-4 protein from Mus musculus (Mouse).